Here is a 269-residue protein sequence, read N- to C-terminus: 5'-nucleotidase SurE (269 aa).

Residues D11, D12, S43, and N101 each coordinate a divalent metal cation.

This sequence belongs to the SurE nucleotidase family. Requires a divalent metal cation as cofactor.

It localises to the cytoplasm. It catalyses the reaction a ribonucleoside 5'-phosphate + H2O = a ribonucleoside + phosphate. Functionally, nucleotidase that shows phosphatase activity on nucleoside 5'-monophosphates. The protein is 5'-nucleotidase SurE of Prochlorococcus marinus (strain MIT 9301).